Here is a 1396-residue protein sequence, read N- to C-terminus: DNA-directed RNA polymerase subunit beta' (1396 aa).

Residues Cys-72, Cys-74, Cys-87, and Cys-90 each contribute to the Zn(2+) site. Asp-463, Asp-465, and Asp-467 together coordinate Mg(2+). Residues Cys-814, Cys-889, Cys-896, and Cys-899 each contribute to the Zn(2+) site.

It belongs to the RNA polymerase beta' chain family. In terms of assembly, the RNAP catalytic core consists of 2 alpha, 1 beta, 1 beta' and 1 omega subunit. When a sigma factor is associated with the core the holoenzyme is formed, which can initiate transcription. The cofactor is Mg(2+). Zn(2+) is required as a cofactor.

The enzyme catalyses RNA(n) + a ribonucleoside 5'-triphosphate = RNA(n+1) + diphosphate. In terms of biological role, DNA-dependent RNA polymerase catalyzes the transcription of DNA into RNA using the four ribonucleoside triphosphates as substrates. The protein is DNA-directed RNA polymerase subunit beta' of Chlamydia trachomatis serovar L2 (strain ATCC VR-902B / DSM 19102 / 434/Bu).